The following is a 72-amino-acid chain: MAKEDCIEMEGVVLEALPNTMFRVELENGRIVTAHISGKMRKNYIRILTGDKVVVEITPYDLTKGRIKFRSK.

The S1-like domain occupies 1–72 (MAKEDCIEME…TKGRIKFRSK (72 aa)).

Belongs to the IF-1 family. In terms of assembly, component of the 30S ribosomal translation pre-initiation complex which assembles on the 30S ribosome in the order IF-2 and IF-3, IF-1 and N-formylmethionyl-tRNA(fMet); mRNA recruitment can occur at any time during PIC assembly.

It localises to the cytoplasm. Functionally, one of the essential components for the initiation of protein synthesis. Stabilizes the binding of IF-2 and IF-3 on the 30S subunit to which N-formylmethionyl-tRNA(fMet) subsequently binds. Helps modulate mRNA selection, yielding the 30S pre-initiation complex (PIC). Upon addition of the 50S ribosomal subunit IF-1, IF-2 and IF-3 are released leaving the mature 70S translation initiation complex. This Francisella tularensis subsp. tularensis (strain FSC 198) protein is Translation initiation factor IF-1.